The primary structure comprises 174 residues: 3-hydroxyanthranilate 3,4-dioxygenase (174 aa).

Arg-47 serves as a coordination point for O2. Fe cation-binding residues include His-51, Glu-57, and His-95. A substrate-binding site is contributed by Glu-57. Arg-99 and Glu-110 together coordinate substrate. Positions 125, 128, 162, and 165 each coordinate Fe cation.

The protein belongs to the 3-HAO family. Homodimer. Fe(2+) is required as a cofactor.

It carries out the reaction 3-hydroxyanthranilate + O2 = (2Z,4Z)-2-amino-3-carboxymuconate 6-semialdehyde. The protein operates within cofactor biosynthesis; NAD(+) biosynthesis; quinolinate from L-kynurenine: step 3/3. Its function is as follows. Catalyzes the oxidative ring opening of 3-hydroxyanthranilate to 2-amino-3-carboxymuconate semialdehyde, which spontaneously cyclizes to quinolinate. This chain is 3-hydroxyanthranilate 3,4-dioxygenase, found in Burkholderia lata (strain ATCC 17760 / DSM 23089 / LMG 22485 / NCIMB 9086 / R18194 / 383).